We begin with the raw amino-acid sequence, 378 residues long: Spermidine/putrescine import ATP-binding protein PotA (378 aa).

In terms of domain architecture, ABC transporter spans 18-248 (VLLSGISKSF…PKNLFVAGFI (231 aa)). 50 to 57 (GPSGCGKT) serves as a coordination point for ATP.

It belongs to the ABC transporter superfamily. Spermidine/putrescine importer (TC 3.A.1.11.1) family. As to quaternary structure, the complex is composed of two ATP-binding proteins (PotA), two transmembrane proteins (PotB and PotC) and a solute-binding protein (PotD).

It is found in the cell inner membrane. It catalyses the reaction ATP + H2O + polyamine-[polyamine-binding protein]Side 1 = ADP + phosphate + polyamineSide 2 + [polyamine-binding protein]Side 1.. In terms of biological role, part of the ABC transporter complex PotABCD involved in spermidine/putrescine import. Responsible for energy coupling to the transport system. The polypeptide is Spermidine/putrescine import ATP-binding protein PotA (Salmonella typhi).